We begin with the raw amino-acid sequence, 336 residues long: Holliday junction branch migration complex subunit RuvB (336 aa).

The segment at 4 to 184 (ADRLISADAI…FGIVQRLEFY (181 aa)) is large ATPase domain (RuvB-L). ATP is bound by residues arginine 24, glycine 65, lysine 68, threonine 69, threonine 70, 131–133 (EDY), arginine 174, tyrosine 184, and arginine 221. Threonine 69 serves as a coordination point for Mg(2+). The interval 185–255 (NVADLQYIVG…VATQALDMLA (71 aa)) is small ATPAse domain (RuvB-S). The interval 258–336 (TEGFDYMDRK…HFGLTREDLG (79 aa)) is head domain (RuvB-H). Positions 294, 313, and 318 each coordinate DNA.

Belongs to the RuvB family. In terms of assembly, homohexamer. Forms an RuvA(8)-RuvB(12)-Holliday junction (HJ) complex. HJ DNA is sandwiched between 2 RuvA tetramers; dsDNA enters through RuvA and exits via RuvB. An RuvB hexamer assembles on each DNA strand where it exits the tetramer. Each RuvB hexamer is contacted by two RuvA subunits (via domain III) on 2 adjacent RuvB subunits; this complex drives branch migration. In the full resolvosome a probable DNA-RuvA(4)-RuvB(12)-RuvC(2) complex forms which resolves the HJ.

The protein localises to the cytoplasm. It carries out the reaction ATP + H2O = ADP + phosphate + H(+). Its function is as follows. The RuvA-RuvB-RuvC complex processes Holliday junction (HJ) DNA during genetic recombination and DNA repair, while the RuvA-RuvB complex plays an important role in the rescue of blocked DNA replication forks via replication fork reversal (RFR). RuvA specifically binds to HJ cruciform DNA, conferring on it an open structure. The RuvB hexamer acts as an ATP-dependent pump, pulling dsDNA into and through the RuvAB complex. RuvB forms 2 homohexamers on either side of HJ DNA bound by 1 or 2 RuvA tetramers; 4 subunits per hexamer contact DNA at a time. Coordinated motions by a converter formed by DNA-disengaged RuvB subunits stimulates ATP hydrolysis and nucleotide exchange. Immobilization of the converter enables RuvB to convert the ATP-contained energy into a lever motion, pulling 2 nucleotides of DNA out of the RuvA tetramer per ATP hydrolyzed, thus driving DNA branch migration. The RuvB motors rotate together with the DNA substrate, which together with the progressing nucleotide cycle form the mechanistic basis for DNA recombination by continuous HJ branch migration. Branch migration allows RuvC to scan DNA until it finds its consensus sequence, where it cleaves and resolves cruciform DNA. The sequence is that of Holliday junction branch migration complex subunit RuvB from Pectobacterium carotovorum subsp. carotovorum (strain PC1).